Here is a 68-residue protein sequence, read N- to C-terminus: UPF0253 protein VFMJ11_0680 (68 aa).

This sequence belongs to the UPF0253 family.

The protein is UPF0253 protein VFMJ11_0680 of Aliivibrio fischeri (strain MJ11) (Vibrio fischeri).